Here is a 254-residue protein sequence, read N- to C-terminus: MIIVISPAKSQNFEPIKTAYQFTQPIFKQQIIKLINTLKHYEVEEIEKLMKISPKLAEEVFAKHNSFNPNKYDNSNAKAAIFTFSGDVYKGLEADTLDNKTIEYAQNHLLMLSGLYGLVRPLDLIQAYRLEMGTNIKIDGKILHKYWQDKITTQLNEYFSQQQNKILINLASNEYSQAIDKKSLAVKWLDIDFKENKAGAYKTIGIHAKKARGLMTRYILENRIENVSDIKKFNVAGYQFNPDFSDENLLCFTR.

It belongs to the UPF0246 family.

This chain is UPF0246 protein FTH_1656, found in Francisella tularensis subsp. holarctica (strain OSU18).